The following is a 190-amino-acid chain: dCTP deaminase, dUMP-forming (190 aa).

DCTP contacts are provided by residues 101-106 (KSSLGR), aspartate 119, 127-129 (TLE), glutamine 148, tyrosine 162, and glutamine 174. Glutamate 129 serves as the catalytic Proton donor/acceptor. Residues 161–190 (PYGSSGVGSKYQGQRGPTPSRSYQNFIRST) are disordered. A compositionally biased stretch (polar residues) spans 171-190 (YQGQRGPTPSRSYQNFIRST).

This sequence belongs to the dCTP deaminase family. As to quaternary structure, homotrimer.

It carries out the reaction dCTP + 2 H2O = dUMP + NH4(+) + diphosphate. It participates in pyrimidine metabolism; dUMP biosynthesis; dUMP from dCTP: step 1/1. Its function is as follows. Bifunctional enzyme that catalyzes both the deamination of dCTP to dUTP and the hydrolysis of dUTP to dUMP without releasing the toxic dUTP intermediate. The protein is dCTP deaminase, dUMP-forming of Mycobacterium ulcerans (strain Agy99).